Consider the following 391-residue polypeptide: Formate-dependent phosphoribosylglycinamide formyltransferase (391 aa).

N(1)-(5-phospho-beta-D-ribosyl)glycinamide contacts are provided by residues 20–21 (EL) and E80. ATP-binding positions include R112, K153, 158-163 (SSGKGQ), 193-196 (EGFI), and E201. The 190-residue stretch at 117–306 (RLAAEELGLT…EFALHVRAFT (190 aa)) folds into the ATP-grasp domain. 2 residues coordinate Mg(2+): E265 and E277. N(1)-(5-phospho-beta-D-ribosyl)glycinamide is bound by residues D284, K354, and 361–362 (RR).

This sequence belongs to the PurK/PurT family. As to quaternary structure, homodimer.

The catalysed reaction is N(1)-(5-phospho-beta-D-ribosyl)glycinamide + formate + ATP = N(2)-formyl-N(1)-(5-phospho-beta-D-ribosyl)glycinamide + ADP + phosphate + H(+). The protein operates within purine metabolism; IMP biosynthesis via de novo pathway; N(2)-formyl-N(1)-(5-phospho-D-ribosyl)glycinamide from N(1)-(5-phospho-D-ribosyl)glycinamide (formate route): step 1/1. Functionally, involved in the de novo purine biosynthesis. Catalyzes the transfer of formate to 5-phospho-ribosyl-glycinamide (GAR), producing 5-phospho-ribosyl-N-formylglycinamide (FGAR). Formate is provided by PurU via hydrolysis of 10-formyl-tetrahydrofolate. The sequence is that of Formate-dependent phosphoribosylglycinamide formyltransferase from Vibrio vulnificus (strain CMCP6).